Here is a 531-residue protein sequence, read N- to C-terminus: Probable inactive beta-glucosidase 25 (531 aa).

The signal sequence occupies residues 1-24 (MALKAILFLGLFLVVIVSPITVYG). A beta-D-glucoside is bound by residues Gln53 and 202-203 (NE). The active-site Proton donor is the Glu203. A disulfide bridge links Cys222 with Cys230. A beta-D-glucoside-binding positions include Phe348 and 477-478 (EW).

The protein belongs to the glycosyl hydrolase 1 family.

The polypeptide is Probable inactive beta-glucosidase 25 (Arabidopsis thaliana (Mouse-ear cress)).